A 110-amino-acid chain; its full sequence is UPF0060 membrane protein Bcep1808_1236 (110 aa).

3 consecutive transmembrane segments (helical) span residues 9–29 (ALFA…WLVL), 34–54 (PVWL…LLTL), and 66–86 (YGGV…GVAL).

The protein belongs to the UPF0060 family.

Its subcellular location is the cell inner membrane. This Burkholderia vietnamiensis (strain G4 / LMG 22486) (Burkholderia cepacia (strain R1808)) protein is UPF0060 membrane protein Bcep1808_1236.